Reading from the N-terminus, the 141-residue chain is Large ribosomal subunit protein uL11 (141 aa).

Belongs to the universal ribosomal protein uL11 family. Part of the ribosomal stalk of the 50S ribosomal subunit. Interacts with L10 and the large rRNA to form the base of the stalk. L10 forms an elongated spine to which L12 dimers bind in a sequential fashion forming a multimeric L10(L12)X complex. One or more lysine residues are methylated.

Forms part of the ribosomal stalk which helps the ribosome interact with GTP-bound translation factors. This is Large ribosomal subunit protein uL11 from Aster yellows witches'-broom phytoplasma (strain AYWB).